The primary structure comprises 237 residues: Sugar fermentation stimulation protein homolog (237 aa).

The protein belongs to the SfsA family.

In Pseudomonas putida (strain ATCC 700007 / DSM 6899 / JCM 31910 / BCRC 17059 / LMG 24140 / F1), this protein is Sugar fermentation stimulation protein homolog.